The chain runs to 36 residues: Protein YmgL (36 aa).

This Escherichia coli (strain K12) protein is Protein YmgL.